Here is a 504-residue protein sequence, read N- to C-terminus: Nuclear hormone receptor family member nhr-80 (504 aa).

Positions 27–103 (STRCLICSAQ…NGMKPGGVQP (77 aa)) form a DNA-binding region, nuclear receptor. NR C4-type zinc fingers lie at residues 30–50 (CLIC…CSAC) and 66–86 (CITG…CRSC). Residues 177–192 (SSSTSFSASTTTNYST) show a composition bias toward low complexity. Positions 177-199 (SSSTSFSASTTTNYSTPGPSPMA) are disordered. The NR LBD domain maps to 214–466 (EEMKLGERRR…KLVLQLLNLD (253 aa)). The tract at residues 455–466 (LDKLVLQLLNLD) is AF-2.

The protein belongs to the nuclear hormone receptor family. Interacts with nuclear hormone receptor nhr-49; the interaction is direct. Expressed in the intestine and in some head and tail neurons, as well as the ventral nerve cord.

It localises to the nucleus. In terms of biological role, transcription factor. Binds to regulatory elements and regulates transcription of target genes, including acyltransferase dgat-2. As part of a lysosome-to-nucleus retrograde lipid signaling pathway, acts as a direct nuclear receptor of oleoylethanolamide (OEA) and, acting in concert with nuclear hormone receptor nhr-49, activates the transcription of genes promoting longevity and mitochondrial beta-oxidation. Required to modulate expression of delta-9 fatty acid desaturases, thereby regulating lipid metabolism; in some contexts, acting in concert with nhr-49. Involved in modulation of lipid metabolism in response to the citrate-induced mitochondrial unfolded protein response (mtUPR), acting downstream of transcription factor dve-1 and ubiquitin-like protein 5. Plays a role in modulating mitochondrial morphology and function. Involved in positively modulating life-span in a germline-dependent manner, acting in concert with nuclear hormone receptor daf-12. Plays a role in transgenerational lipid accumulation in response to a high-fat diet. The sequence is that of Nuclear hormone receptor family member nhr-80 from Caenorhabditis elegans.